The sequence spans 491 residues: Protein nucleotidyltransferase YdiU (491 aa).

Residues glycine 94, glycine 96, arginine 97, lysine 117, aspartate 129, glycine 130, arginine 180, and arginine 187 each coordinate ATP. The Proton acceptor role is filled by aspartate 256. Mg(2+) contacts are provided by asparagine 257 and aspartate 266. Aspartate 266 contacts ATP.

It belongs to the SELO family. It depends on Mg(2+) as a cofactor. Mn(2+) serves as cofactor.

It carries out the reaction L-seryl-[protein] + ATP = 3-O-(5'-adenylyl)-L-seryl-[protein] + diphosphate. The catalysed reaction is L-threonyl-[protein] + ATP = 3-O-(5'-adenylyl)-L-threonyl-[protein] + diphosphate. The enzyme catalyses L-tyrosyl-[protein] + ATP = O-(5'-adenylyl)-L-tyrosyl-[protein] + diphosphate. It catalyses the reaction L-histidyl-[protein] + UTP = N(tele)-(5'-uridylyl)-L-histidyl-[protein] + diphosphate. It carries out the reaction L-seryl-[protein] + UTP = O-(5'-uridylyl)-L-seryl-[protein] + diphosphate. The catalysed reaction is L-tyrosyl-[protein] + UTP = O-(5'-uridylyl)-L-tyrosyl-[protein] + diphosphate. Functionally, nucleotidyltransferase involved in the post-translational modification of proteins. It can catalyze the addition of adenosine monophosphate (AMP) or uridine monophosphate (UMP) to a protein, resulting in modifications known as AMPylation and UMPylation. This is Protein nucleotidyltransferase YdiU from Clostridium botulinum (strain Loch Maree / Type A3).